A 187-amino-acid polypeptide reads, in one-letter code: Peptidyl-tRNA hydrolase (187 aa).

Phe-14 contributes to the tRNA binding site. His-19 serves as the catalytic Proton acceptor. Tyr-64, Asn-66, and Asn-112 together coordinate tRNA.

This sequence belongs to the PTH family. As to quaternary structure, monomer.

The protein localises to the cytoplasm. The catalysed reaction is an N-acyl-L-alpha-aminoacyl-tRNA + H2O = an N-acyl-L-amino acid + a tRNA + H(+). Functionally, hydrolyzes ribosome-free peptidyl-tRNAs (with 1 or more amino acids incorporated), which drop off the ribosome during protein synthesis, or as a result of ribosome stalling. Its function is as follows. Catalyzes the release of premature peptidyl moieties from peptidyl-tRNA molecules trapped in stalled 50S ribosomal subunits, and thus maintains levels of free tRNAs and 50S ribosomes. This chain is Peptidyl-tRNA hydrolase, found in Oceanobacillus iheyensis (strain DSM 14371 / CIP 107618 / JCM 11309 / KCTC 3954 / HTE831).